The primary structure comprises 270 residues: Non-structural maintenance of chromosomes element 1 homolog (270 aa).

An RING-type; atypical zinc finger spans residues 185-226 (CNVCRKVAIQSQLCENCGIPLHLQCAGKYFHGKANPTCPNCN). The tract at residues 236 to 270 (LNQVSSQGPSHSQTETVRGRNQRSKNTSTASRTSR) is disordered. 2 stretches are compositionally biased toward polar residues: residues 237-251 (NQVS…QTET) and 259-270 (SKNTSTASRTSR).

The protein belongs to the NSE1 family. As to quaternary structure, component of the SMC5-SMC6 complex.

It is found in the nucleus. It localises to the chromosome. The protein localises to the telomere. It carries out the reaction S-ubiquitinyl-[E2 ubiquitin-conjugating enzyme]-L-cysteine + [acceptor protein]-L-lysine = [E2 ubiquitin-conjugating enzyme]-L-cysteine + N(6)-ubiquitinyl-[acceptor protein]-L-lysine.. RING-type zinc finger-containing E3 ubiquitin ligase that assembles with melanoma antigen protein (MAGE) to catalyze the direct transfer of ubiquitin from E2 ubiquitin-conjugating enzyme to a specific substrate. Within MAGE-RING ubiquitin ligase complex, MAGE stimulates and specifies ubiquitin ligase activity likely through recruitment and/or stabilization of the E2 ubiquitin-conjugating enzyme at the E3:substrate complex. Involved in maintenance of genome integrity, DNA damage response and DNA repair. In Xenopus laevis (African clawed frog), this protein is Non-structural maintenance of chromosomes element 1 homolog (nsmce1).